Here is a 304-residue protein sequence, read N- to C-terminus: Galactofuranosyltransferase GlfT1 (304 aa).

Belongs to the glycosyltransferase 2 family. As to quaternary structure, is probably part of an AG biosynthetic complex.

It is found in the cell membrane. It localises to the secreted. The protein localises to the cell wall. The enzyme catalyses alpha-L-rhamnosyl-(1-&gt;3)-N-acetyl-alpha-D-glucosaminyl-diphospho-trans,octa-cis-decaprenol + 2 UDP-alpha-D-galactofuranose = beta-D-galactofuranosyl-(1-&gt;5)-beta-D-galactofuranosyl-(1-&gt;4)-alpha-L-rhamnosyl-(1-&gt;3)-N-acetyl-alpha-D-glucosaminyl-diphospho-trans,octa-cis-decaprenol + 2 UDP + 2 H(+). Its pathway is cell wall biogenesis; cell wall polysaccharide biosynthesis. In terms of biological role, involved in the biosynthesis of the arabinogalactan (AG) region of the mycolylarabinogalactan-peptidoglycan (mAGP) complex, an essential component of the mycobacterial cell wall. Catalyzes the transfer of the first two galactofuranosyl (Galf) units from UDP-galactofuranose (UDP-Galf) onto the rhamnosyl-GlcNAc-diphospho-decaprenol (Rha-GlcNAc-PP-C50) acceptor, yielding galactofuranosyl-galactofuranosyl-rhamnosyl-GlcNAc-diphospho-decaprenol (Galf-Galf-Rha-GlcNAc-PP-C50). Thus, GlfT1 is the initiator of galactan synthesis, while GlfT2 continues with the subsequent polymerization events. This is Galactofuranosyltransferase GlfT1 from Mycobacterium tuberculosis (strain CDC 1551 / Oshkosh).